The chain runs to 917 residues: Glutamate receptor (917 aa).

Residues 1-19 (MDTCVFPLVVLWISMRITS) form the signal peptide. At 20–556 (TLDEVPIGGI…HFFSFMEPLS (537 aa)) the chain is on the extracellular side. Asparagine 62, asparagine 95, asparagine 121, asparagine 125, asparagine 229, asparagine 251, asparagine 261, asparagine 272, asparagine 418, asparagine 419, asparagine 424, and asparagine 491 each carry an N-linked (GlcNAc...) asparagine glycan. A helical membrane pass occupies residues 557-577 (SEIWMCIVFAYIGVSVVLFLV). The Cytoplasmic portion of the chain corresponds to 578–631 (SRFSPNEWHLSEAHHSYIANDFSISNSLWFSLGAFMQQGCDISPRSMSGRIVGS). Residues 632–652 (VWWFFTLIIISSYTANLAAFL) form a helical membrane-spanning segment. Residues 653–818 (TVERMLTPID…GAQSALTLAN (166 aa)) are Extracellular-facing. Asparagine 775 carries N-linked (GlcNAc...) asparagine glycosylation. A helical membrane pass occupies residues 819–839 (VAGIFYILIGGLVVAVLSAAF). Over 840-917 (EFLYKSRMDS…FEDSNTHTEV (78 aa)) the chain is Cytoplasmic. Residues 871–896 (HIDSEQKTTGNGTRRRSHNSVTYTYT) are disordered.

The protein belongs to the glutamate-gated ion channel (TC 1.A.10.1) family.

The protein localises to the cell membrane. Its subcellular location is the postsynaptic cell membrane. Receptor for glutamate. L-glutamate acts as an excitatory neurotransmitter at many synapses in the central nervous system. The postsynaptic actions of Glu are mediated by a variety of receptors. This chain is Glutamate receptor, found in Lymnaea stagnalis (Great pond snail).